The primary structure comprises 245 residues: Probable phosphatase YcdX (245 aa).

Residues H7, H9, H15, H40, E73, H101, H131, D192, and H194 each coordinate Zn(2+).

The protein belongs to the PHP family. As to quaternary structure, homotrimer. Zn(2+) serves as cofactor.

In Shigella flexneri serotype 5b (strain 8401), this protein is Probable phosphatase YcdX.